A 1195-amino-acid chain; its full sequence is Phosphatidylinositol-3,5-bisphosphate 3-phosphatase MTMR4 (1195 aa).

Ser8 bears the Phosphoserine mark. A Myotubularin phosphatase domain is found at Glu153–Tyr570. Positions 320, 345, and 346 each coordinate a 1,2-diacyl-sn-glycero-3-phospho-(1D-myo-inositol-3,5-bisphosphate). A 1,2-diacyl-sn-glycero-3-phospho-(1D-myo-inositol-3-phosphate)-binding residues include Asn320, Asn345, and Ile346. Cys407 serves as the catalytic Phosphocysteine intermediate. The a 1,2-diacyl-sn-glycero-3-phospho-(1D-myo-inositol-3,5-bisphosphate) site is built by Ser408, Asp409, Gly410, Trp411, Asp412, Arg413, Lys449, and Arg453. A 1,2-diacyl-sn-glycero-3-phospho-(1D-myo-inositol-3-phosphate) is bound by residues Ser408, Asp409, Gly410, Trp411, Asp412, and Arg413. Residue Arg453 coordinates a 1,2-diacyl-sn-glycero-3-phospho-(1D-myo-inositol-3-phosphate). Residues Ser610 and Ser629 each carry the phosphoserine modification. Disordered stretches follow at residues Glu645–Pro756, Glu780–Gly800, and Asp827–Asn877. Over residues Pro720–Lys729 the composition is skewed to basic and acidic residues. 2 stretches are compositionally biased toward polar residues: residues Glu780–Pro795 and Asp831–Pro854. Positions Val1004–Tyr1008 match the PY-motif; substrate motif for NEDD4 motif. Residues His1023–Cys1055 are a coiled coil. The FYVE-type zinc finger occupies Asp1114–Gln1174. Zn(2+)-binding residues include Cys1120, Cys1123, Cys1136, Cys1139, Cys1144, Cys1147, Cys1166, and Cys1169.

It belongs to the protein-tyrosine phosphatase family. Non-receptor class myotubularin subfamily. Homooligomeric. Forms MTMR3:MTMR4 heterooligomers; regulates the localization of both proteins. The MTMR3:MTMR4 heterooligomer can also recruit both CEP55 and PLK1; occurs during early mitosis, regulates the phosphorylation of CEP55 by PLK1 and its recruitment to the midbody where it can mediate cell abscission. Interacts with SMAD2 and SMAD3; negatively regulates TGF-beta signaling through SMAD2 and SMAD3 dephosphorylation and retention in endosomes. Interacts with SMAD1; negatively regulates BMP signaling through SMAD1 dephosphorylation and retention in endosomes. Post-translationally, ubiquitinated. Ubiquitination by NEDD4 probably leads to proteasomal degradation. In terms of processing, phosphorylated by CDK1 during mitosis. In terms of tissue distribution, expressed in brain, heart, kidney, spleen, liver, colon, testis, muscle, placenta, thyroid gland, pancreas, ovary, prostate, skin, peripheral blood, and bone marrow.

It is found in the early endosome membrane. The protein resides in the recycling endosome membrane. Its subcellular location is the late endosome membrane. It localises to the cytoplasmic vesicle. The protein localises to the phagosome membrane. It catalyses the reaction a 1,2-diacyl-sn-glycero-3-phospho-(1D-myo-inositol-3-phosphate) + H2O = a 1,2-diacyl-sn-glycero-3-phospho-(1D-myo-inositol) + phosphate. The enzyme catalyses a 1,2-diacyl-sn-glycero-3-phospho-(1D-myo-inositol-3,5-bisphosphate) + H2O = a 1,2-diacyl-sn-glycero-3-phospho-(1D-myo-inositol-5-phosphate) + phosphate. It carries out the reaction 1,2-dioctanoyl-sn-glycero-3-phospho-(1-D-myo-inositol-3-phosphate) + H2O = 1,2-dioctanoyl-sn-glycero-3-phospho-(1D-myo-inositol) + phosphate. The catalysed reaction is 1,2-dioctanoyl-sn-glycero-3-phospho-(1D-myo-inositol-3,5-bisphosphate) + H2O = 1,2-dioctanoyl-sn-glycero-3-phospho-(1D-myo-inositol-5-phosphate) + phosphate. The phosphatidylinositol-3-phosphate phosphatase activity is inhibited by vanadate. Lipid phosphatase that specifically dephosphorylates the D-3 position of phosphatidylinositol 3-phosphate and phosphatidylinositol 3,5-bisphosphate, generating phosphatidylinositol and phosphatidylinositol 5-phosphate. Decreases the levels of phosphatidylinositol 3-phosphate, a phospholipid found in cell membranes where it acts as key regulator of both cell signaling and intracellular membrane traffic, in a subset of endosomal membranes to negatively regulate both endocytic recycling and trafficking and/or maturation of endosomes toward lysosomes. Through phosphatidylinositol 3-phosphate turnover in phagosome membranes regulates phagocytosis and phagosome maturation. By decreasing phosphatidylinositol 3-monophosphate (PI3P) levels in immune cells it can also regulate the innate immune response. Beside its lipid phosphatase activity, can also function as a molecular adapter to regulate midbody abscission during mitotic cytokinesis. Can also negatively regulate TGF-beta and BMP signaling through Smad proteins dephosphorylation and retention in endosomes. The chain is Phosphatidylinositol-3,5-bisphosphate 3-phosphatase MTMR4 from Homo sapiens (Human).